The sequence spans 72 residues: Large ribosomal subunit protein uL29 (72 aa).

It belongs to the universal ribosomal protein uL29 family.

The polypeptide is Large ribosomal subunit protein uL29 (Thermus thermophilus (strain ATCC BAA-163 / DSM 7039 / HB27)).